Here is a 452-residue protein sequence, read N- to C-terminus: Bis(5'-adenosyl)-triphosphatase ENPP4 (452 aa).

A signal peptide spans 1-15 (MKLLVILLFSGLITG). The Extracellular segment spans residues 16 to 406 (FRSDSSSSLP…DQWCINLPEA (391 aa)). Aspartate 34 and threonine 70 together coordinate Zn(2+). Threonine 70 serves as the catalytic AMP-threonine intermediate. Substrate contacts are provided by asparagine 91 and tyrosine 154. Asparagine 155 and asparagine 166 each carry an N-linked (GlcNAc...) asparagine glycan. Residues aspartate 189, histidine 193, aspartate 237, and histidine 238 each contribute to the Zn(2+) site. Aspartate 189 lines the substrate pocket. A disulfide bridge links cysteine 254 with cysteine 287. Asparagine 276 carries an N-linked (GlcNAc...) asparagine glycan. Residue histidine 335 participates in Zn(2+) binding. A disulfide bridge links cysteine 393 with cysteine 400. The chain crosses the membrane as a helical span at residues 407–427 (IAIVIGSLLVLTMLTCLIIIM). The Cytoplasmic portion of the chain corresponds to 428 to 452 (QNRLSVPRPFSRLQLQEDDDDPLIG).

This sequence belongs to the nucleotide pyrophosphatase/phosphodiesterase family. The cofactor is Zn(2+).

The protein resides in the cell membrane. It catalyses the reaction P(1),P(3)-bis(5'-adenosyl) triphosphate + H2O = AMP + ADP + 2 H(+). Hydrolyzes extracellular Ap3A into AMP and ADP, and Ap4A into AMP and ATP. Ap3A and Ap4A are diadenosine polyphosphates thought to induce proliferation of vascular smooth muscle cells. Acts as a procoagulant, mediating platelet aggregation at the site of nascent thrombus via release of ADP from Ap3A and activation of ADP receptors. The polypeptide is Bis(5'-adenosyl)-triphosphatase ENPP4 (ENPP4) (Pongo abelii (Sumatran orangutan)).